The chain runs to 61 residues: Small ribosomal subunit protein uS14 (61 aa).

Positions 24, 27, 40, and 43 each coordinate Zn(2+).

The protein belongs to the universal ribosomal protein uS14 family. Zinc-binding uS14 subfamily. Part of the 30S ribosomal subunit. Contacts proteins S3 and S10. Requires Zn(2+) as cofactor.

In terms of biological role, binds 16S rRNA, required for the assembly of 30S particles and may also be responsible for determining the conformation of the 16S rRNA at the A site. This Ruminiclostridium cellulolyticum (strain ATCC 35319 / DSM 5812 / JCM 6584 / H10) (Clostridium cellulolyticum) protein is Small ribosomal subunit protein uS14.